We begin with the raw amino-acid sequence, 452 residues long: Phosphoglucosamine mutase (452 aa).

Residue serine 103 is the Phosphoserine intermediate of the active site. Mg(2+)-binding residues include serine 103, aspartate 244, aspartate 246, and aspartate 248. Serine 103 is subject to Phosphoserine.

The protein belongs to the phosphohexose mutase family. The cofactor is Mg(2+). Activated by phosphorylation.

It catalyses the reaction alpha-D-glucosamine 1-phosphate = D-glucosamine 6-phosphate. Functionally, catalyzes the conversion of glucosamine-6-phosphate to glucosamine-1-phosphate. The sequence is that of Phosphoglucosamine mutase from Rhodospirillum rubrum (strain ATCC 11170 / ATH 1.1.1 / DSM 467 / LMG 4362 / NCIMB 8255 / S1).